The sequence spans 197 residues: dITP/XTP pyrophosphatase (197 aa).

Threonine 8–lysine 13 lines the substrate pocket. Positions 40 and 69 each coordinate Mg(2+). Residue aspartate 69 is the Proton acceptor of the active site. Substrate contacts are provided by residues serine 70, phenylalanine 154–aspartate 157, lysine 177, and histidine 182–arginine 183.

It belongs to the HAM1 NTPase family. As to quaternary structure, homodimer. Mg(2+) serves as cofactor.

The enzyme catalyses XTP + H2O = XMP + diphosphate + H(+). It carries out the reaction dITP + H2O = dIMP + diphosphate + H(+). It catalyses the reaction ITP + H2O = IMP + diphosphate + H(+). In terms of biological role, pyrophosphatase that catalyzes the hydrolysis of nucleoside triphosphates to their monophosphate derivatives, with a high preference for the non-canonical purine nucleotides XTP (xanthosine triphosphate), dITP (deoxyinosine triphosphate) and ITP. Seems to function as a house-cleaning enzyme that removes non-canonical purine nucleotides from the nucleotide pool, thus preventing their incorporation into DNA/RNA and avoiding chromosomal lesions. The chain is dITP/XTP pyrophosphatase from Yersinia pestis.